The chain runs to 1124 residues: Phytochrome A1 (1124 aa).

Low complexity predominate over residues 1–14 (MSSSRPSQSSTTSA). Residues 1–20 (MSSSRPSQSSTTSARSKHSA) are disordered. Residues 218–401 (SMERLCDTMV…VFAIHVNKEL (184 aa)) enclose the GAF domain. Phytochromobilin is bound at residue cysteine 323. Residues 617-687 (VTAEMVRLIE…KMLELALQGK (71 aa)) enclose the PAS 1 domain. The region spanning 690 to 746 (RNVEFEIKTHGPSGDSSPISLIVNACASRDVGDSVVGVCFIAQDITGQKNIMDKFTR) is the PAC domain. The 75-residue stretch at 747 to 821 (IEGDYRAIIQ…KNQEAFVNFG (75 aa)) folds into the PAS 2 domain. Residues 901–1118 (YIRRQIRNPL…TFIISVELAV (218 aa)) enclose the Histidine kinase domain.

The protein belongs to the phytochrome family. As to quaternary structure, homodimer. In terms of processing, contains one covalently linked phytochromobilin chromophore.

In terms of biological role, regulatory photoreceptor which exists in two forms that are reversibly interconvertible by light: the Pr form that absorbs maximally in the red region of the spectrum and the Pfr form that absorbs maximally in the far-red region. Photoconversion of Pr to Pfr induces an array of morphogenic responses, whereas reconversion of Pfr to Pr cancels the induction of those responses. Pfr controls the expression of a number of nuclear genes including those encoding the small subunit of ribulose-bisphosphate carboxylase, chlorophyll A/B binding protein, protochlorophyllide reductase, rRNA, etc. It also controls the expression of its own gene(s) in a negative feedback fashion. The polypeptide is Phytochrome A1 (PHYA1) (Nicotiana tabacum (Common tobacco)).